A 129-amino-acid chain; its full sequence is Small ribosomal subunit protein uS11 (129 aa).

Residues 108-129 (EDVTPIPHDGTKPKGGKRGRRV) form a disordered region.

This sequence belongs to the universal ribosomal protein uS11 family. Part of the 30S ribosomal subunit.

Functionally, located on the platform of the 30S subunit. The sequence is that of Small ribosomal subunit protein uS11 from Methanothrix thermoacetophila (strain DSM 6194 / JCM 14653 / NBRC 101360 / PT) (Methanosaeta thermophila).